The sequence spans 513 residues: 2-isopropylmalate synthase (513 aa).

One can recognise a Pyruvate carboxyltransferase domain in the interval 4–266 (IEFFDTSLRD…KSPLVLAETM (263 aa)). Mn(2+) contacts are provided by Asp13, His201, His203, and Asn237. The segment at 390–513 (ILNNVQIDGH…VEQISAHDGI (124 aa)) is regulatory domain.

Belongs to the alpha-IPM synthase/homocitrate synthase family. LeuA type 1 subfamily. Homodimer. Requires Mn(2+) as cofactor.

The protein localises to the cytoplasm. The enzyme catalyses 3-methyl-2-oxobutanoate + acetyl-CoA + H2O = (2S)-2-isopropylmalate + CoA + H(+). It functions in the pathway amino-acid biosynthesis; L-leucine biosynthesis; L-leucine from 3-methyl-2-oxobutanoate: step 1/4. Its function is as follows. Catalyzes the condensation of the acetyl group of acetyl-CoA with 3-methyl-2-oxobutanoate (2-ketoisovalerate) to form 3-carboxy-3-hydroxy-4-methylpentanoate (2-isopropylmalate). In Lactococcus lactis subsp. cremoris (strain SK11), this protein is 2-isopropylmalate synthase.